Reading from the N-terminus, the 348-residue chain is Elongation factor Ts (348 aa).

An involved in Mg(2+) ion dislocation from EF-Tu region spans residues 82–85 (TDFV).

The protein belongs to the EF-Ts family.

It is found in the cytoplasm. In terms of biological role, associates with the EF-Tu.GDP complex and induces the exchange of GDP to GTP. It remains bound to the aminoacyl-tRNA.EF-Tu.GTP complex up to the GTP hydrolysis stage on the ribosome. This chain is Elongation factor Ts, found in Aliarcobacter butzleri (strain RM4018) (Arcobacter butzleri).